The sequence spans 330 residues: Malate dehydrogenase (330 aa).

12–18 (GAAGQIG) is a binding site for NAD(+). The substrate site is built by Arg-93 and Arg-99. NAD(+) contacts are provided by residues Asn-106, Gln-113, and 130-132 (VGN). Substrate-binding residues include Asn-132 and Arg-166. The Proton acceptor role is filled by His-191.

The protein belongs to the LDH/MDH superfamily. MDH type 2 family.

The catalysed reaction is (S)-malate + NAD(+) = oxaloacetate + NADH + H(+). Functionally, catalyzes the reversible oxidation of malate to oxaloacetate. The polypeptide is Malate dehydrogenase (Azoarcus sp. (strain BH72)).